The chain runs to 233 residues: Snake venom serine protease ussurase (233 aa).

The 224-residue stretch at 1 to 224 folds into the Peptidase S1 domain; sequence VIGGVECNIN…YTDWIQSIIS (224 aa). 6 cysteine pairs are disulfide-bonded: Cys-7/Cys-138, Cys-25/Cys-41, Cys-73/Cys-231, Cys-117/Cys-185, Cys-149/Cys-164, and Cys-175/Cys-200. His-40 functions as the Charge relay system in the catalytic mechanism. N-linked (GlcNAc...) asparagine glycosylation is present at Asn-54. Residue Asp-85 is the Charge relay system of the active site. Catalysis depends on Ser-179, which acts as the Charge relay system.

It belongs to the peptidase S1 family. Snake venom subfamily. Monomer. In terms of tissue distribution, expressed by the venom gland.

It is found in the secreted. In terms of biological role, snake venom serine protease that may act in the hemostasis system of the prey. The protein is Snake venom serine protease ussurase of Gloydius ussuriensis (Ussuri mamushi).